The chain runs to 196 residues: Phosphoheptose isomerase (196 aa).

The SIS domain maps to 31 to 196 (VARQFKAGNK…KAGLEAQIAV (166 aa)). Substrate is bound at residue 46–48 (NGG). Positions 55 and 59 each coordinate Zn(2+). Residues Glu59, 88 to 89 (ND), 114 to 116 (STS), Ser119, and Gln166 each bind substrate. Positions 166 and 174 each coordinate Zn(2+).

The protein belongs to the SIS family. GmhA subfamily. It depends on Zn(2+) as a cofactor.

The protein localises to the cytoplasm. It catalyses the reaction 2 D-sedoheptulose 7-phosphate = D-glycero-alpha-D-manno-heptose 7-phosphate + D-glycero-beta-D-manno-heptose 7-phosphate. The protein operates within carbohydrate biosynthesis; D-glycero-D-manno-heptose 7-phosphate biosynthesis; D-glycero-alpha-D-manno-heptose 7-phosphate and D-glycero-beta-D-manno-heptose 7-phosphate from sedoheptulose 7-phosphate: step 1/1. Catalyzes the isomerization of sedoheptulose 7-phosphate in D-glycero-D-manno-heptose 7-phosphate. The protein is Phosphoheptose isomerase of Crocosphaera subtropica (strain ATCC 51142 / BH68) (Cyanothece sp. (strain ATCC 51142)).